Here is a 282-residue protein sequence, read N- to C-terminus: tRNA uridine(34) hydroxylase (282 aa).

The Rhodanese domain maps to 128–222; sequence DGRPVVMLDT…YFEEVGGSHY (95 aa). Cys-182 functions as the Cysteine persulfide intermediate in the catalytic mechanism.

This sequence belongs to the TrhO family.

The enzyme catalyses uridine(34) in tRNA + AH2 + O2 = 5-hydroxyuridine(34) in tRNA + A + H2O. Catalyzes oxygen-dependent 5-hydroxyuridine (ho5U) modification at position 34 in tRNAs. The chain is tRNA uridine(34) hydroxylase from Cupriavidus metallidurans (strain ATCC 43123 / DSM 2839 / NBRC 102507 / CH34) (Ralstonia metallidurans).